The primary structure comprises 312 residues: GDSL esterase/lipase At2g38180 (312 aa).

An N-terminal signal peptide occupies residues 1-22 (MVGPVRPQIVLFGSSIVQYSFT). Asparagine 79 is a glycosylation site (N-linked (GlcNAc...) asparagine). The interval 285–312 (EPPHPVSLCDHELTQNEQLEPPQPTARL) is disordered.

This sequence belongs to the 'GDSL' lipolytic enzyme family.

It localises to the secreted. This Arabidopsis thaliana (Mouse-ear cress) protein is GDSL esterase/lipase At2g38180.